The following is a 298-amino-acid chain: ATP phosphoribosyltransferase (298 aa).

The protein belongs to the ATP phosphoribosyltransferase family. Long subfamily. It depends on Mg(2+) as a cofactor.

The protein localises to the cytoplasm. It carries out the reaction 1-(5-phospho-beta-D-ribosyl)-ATP + diphosphate = 5-phospho-alpha-D-ribose 1-diphosphate + ATP. The protein operates within amino-acid biosynthesis; L-histidine biosynthesis; L-histidine from 5-phospho-alpha-D-ribose 1-diphosphate: step 1/9. With respect to regulation, feedback inhibited by histidine. In terms of biological role, catalyzes the condensation of ATP and 5-phosphoribose 1-diphosphate to form N'-(5'-phosphoribosyl)-ATP (PR-ATP). Has a crucial role in the pathway because the rate of histidine biosynthesis seems to be controlled primarily by regulation of HisG enzymatic activity. The polypeptide is ATP phosphoribosyltransferase (Aliivibrio fischeri (strain MJ11) (Vibrio fischeri)).